We begin with the raw amino-acid sequence, 148 residues long: 3-dehydroquinate dehydratase (148 aa).

The Proton acceptor role is filled by Tyr-24. Residues Asn-80, His-86, and Asp-93 each coordinate substrate. His-106 acts as the Proton donor in catalysis. Substrate-binding positions include 107-108 (IS) and Arg-117.

This sequence belongs to the type-II 3-dehydroquinase family. In terms of assembly, homododecamer.

It catalyses the reaction 3-dehydroquinate = 3-dehydroshikimate + H2O. The protein operates within metabolic intermediate biosynthesis; chorismate biosynthesis; chorismate from D-erythrose 4-phosphate and phosphoenolpyruvate: step 3/7. Its function is as follows. Catalyzes a trans-dehydration via an enolate intermediate. The sequence is that of 3-dehydroquinate dehydratase from Acidovorax ebreus (strain TPSY) (Diaphorobacter sp. (strain TPSY)).